A 410-amino-acid chain; its full sequence is Testis-specific Y-encoded-like protein 6 (410 aa).

Disordered regions lie at residues 1 to 31 and 46 to 69; these read MSLP…EKSK and PIVF…DGGH. At Ser-9 the chain carries Phosphoserine. Over residues 18–31 the composition is skewed to basic and acidic residues; the sequence is EDPHQGQRSREKSK.

It belongs to the nucleosome assembly protein (NAP) family.

The polypeptide is Testis-specific Y-encoded-like protein 6 (TSPYL6) (Homo sapiens (Human)).